Reading from the N-terminus, the 276-residue chain is Large ribosomal subunit protein uL2cy (276 aa).

2 disordered regions span residues 1–25 (MAIH…VKSN) and 225–276 (MNPV…RRSK). Residues 7 to 25 (KTSTPSTRNGTVDSQVKSN) show a composition bias toward polar residues.

It belongs to the universal ribosomal protein uL2 family. In terms of assembly, part of the 50S ribosomal subunit.

It is found in the plastid. Its subcellular location is the chloroplast. The polypeptide is Large ribosomal subunit protein uL2cy (rpl2-B) (Coffea arabica (Arabian coffee)).